Reading from the N-terminus, the 146-residue chain is Large ribosomal subunit protein uL15 (146 aa).

A disordered region spans residues 18 to 45 (VLGRGLGCGKGKTSGRGHKGQKARSGCA). Residues 30–39 (TSGRGHKGQK) are compositionally biased toward basic residues.

Belongs to the universal ribosomal protein uL15 family. In terms of assembly, part of the 50S ribosomal subunit.

Its function is as follows. Binds to the 23S rRNA. This Anaplasma marginale (strain St. Maries) protein is Large ribosomal subunit protein uL15.